The sequence spans 498 residues: Type II secretion system protein E (498 aa).

Residues C394, C397, C425, and C428 each coordinate Zn(2+).

The protein belongs to the GSP E family. As to quaternary structure, forms homooligomers; most probably hexamers. Interacts with OutL/GspL. Zn(2+) serves as cofactor.

The protein resides in the cell inner membrane. It carries out the reaction ATP + H2O + cellular proteinSide 1 = ADP + phosphate + cellular proteinSide 2.. Functionally, ATPase component of the type II secretion system required for the energy-dependent secretion of extracellular factors such as proteases and toxins from the periplasm. Acts as a molecular motor to provide the energy that is required for assembly of the pseudopilus and the extrusion of substrates generated in the cytoplasm. The chain is Type II secretion system protein E (outE) from Dickeya dadantii (strain 3937) (Erwinia chrysanthemi (strain 3937)).